A 435-amino-acid polypeptide reads, in one-letter code: Enolase (435 aa).

Q167 is a (2R)-2-phosphoglycerate binding site. E209 (proton donor) is an active-site residue. Mg(2+) contacts are provided by D246, E292, and D319. Residues K344, R373, S374, and K395 each contribute to the (2R)-2-phosphoglycerate site. The Proton acceptor role is filled by K344.

The protein belongs to the enolase family. Mg(2+) is required as a cofactor.

The protein resides in the cytoplasm. It is found in the secreted. Its subcellular location is the cell surface. The enzyme catalyses (2R)-2-phosphoglycerate = phosphoenolpyruvate + H2O. Its pathway is carbohydrate degradation; glycolysis; pyruvate from D-glyceraldehyde 3-phosphate: step 4/5. Functionally, catalyzes the reversible conversion of 2-phosphoglycerate (2-PG) into phosphoenolpyruvate (PEP). It is essential for the degradation of carbohydrates via glycolysis. In Lachnospira eligens (strain ATCC 27750 / DSM 3376 / VPI C15-48 / C15-B4) (Eubacterium eligens), this protein is Enolase.